We begin with the raw amino-acid sequence, 183 residues long: Ribosome rescue factor SmrB (183 aa).

Positions 98 to 173 (LDLHGLTQLQ…GDAALLVLIE (76 aa)) constitute a Smr domain.

It belongs to the SmrB family. Associates with collided ribosomes, but not with correctly translating polysomes.

In terms of biological role, acts as a ribosome collision sensor. Detects stalled/collided disomes (pairs of ribosomes where the leading ribosome is stalled and a second ribosome has collided with it) and endonucleolytically cleaves mRNA at the 5' boundary of the stalled ribosome. Stalled/collided disomes form a new interface (primarily via the 30S subunits) that binds SmrB. Cleaved mRNA becomes available for tmRNA ligation, leading to ribosomal subunit dissociation and rescue of stalled ribosomes. In Escherichia coli O17:K52:H18 (strain UMN026 / ExPEC), this protein is Ribosome rescue factor SmrB.